The following is a 162-amino-acid chain: Cyclic pyranopterin monophosphate synthase (162 aa).

Residues 75–77 (LCH) and 113–114 (ME) each bind substrate. Residue Asp128 is part of the active site.

Belongs to the MoaC family. As to quaternary structure, homohexamer; trimer of dimers.

The catalysed reaction is (8S)-3',8-cyclo-7,8-dihydroguanosine 5'-triphosphate = cyclic pyranopterin phosphate + diphosphate. It functions in the pathway cofactor biosynthesis; molybdopterin biosynthesis. Functionally, catalyzes the conversion of (8S)-3',8-cyclo-7,8-dihydroguanosine 5'-triphosphate to cyclic pyranopterin monophosphate (cPMP). The polypeptide is Cyclic pyranopterin monophosphate synthase (Burkholderia vietnamiensis (strain G4 / LMG 22486) (Burkholderia cepacia (strain R1808))).